A 332-amino-acid polypeptide reads, in one-letter code: Arrestin domain-containing protein 5 (332 aa).

The disordered stretch occupies residues 311–332 (SNQTAAGCRTRAPLPVSPDQQN).

The protein belongs to the arrestin family.

The protein localises to the membrane. Functionally, plays an essential role in spermatogenesis. May be involved in the anchoring of the sperm head to the tail during spermatogenesis by affecting SEC22A-mediated SUN5 and NDC1 transport and localization. The protein is Arrestin domain-containing protein 5 (ARRDC5) of Bos taurus (Bovine).